The chain runs to 177 residues: Copper-binding regulatory protein cuf2 (177 aa).

The segment at residues 1-40 is a DNA-binding region (copper-fist); it reads MIIIDGKNYACVVCLRGHRGSSCQHQERALIEVRTRGRPL. Positions 11, 14, 23, and 25 each coordinate Zn(2+).

It localises to the nucleus. This chain is Copper-binding regulatory protein cuf2 (cuf2), found in Schizosaccharomyces pombe (strain 972 / ATCC 24843) (Fission yeast).